A 216-amino-acid chain; its full sequence is Uracil phosphoribosyltransferase (216 aa).

Residue 30-34 (KTLVR) coordinates GTP. 5-phospho-alpha-D-ribose 1-diphosphate is bound by residues Arg-80, Arg-105, and 140 to 148 (DPMIATAST). Uracil-binding positions include Ile-203 and 208-210 (GDA). Asp-209 is a binding site for 5-phospho-alpha-D-ribose 1-diphosphate.

It belongs to the UPRTase family. Mg(2+) is required as a cofactor.

The enzyme catalyses UMP + diphosphate = 5-phospho-alpha-D-ribose 1-diphosphate + uracil. The protein operates within pyrimidine metabolism; UMP biosynthesis via salvage pathway; UMP from uracil: step 1/1. With respect to regulation, allosterically activated by GTP. In terms of biological role, catalyzes the conversion of uracil and 5-phospho-alpha-D-ribose 1-diphosphate (PRPP) to UMP and diphosphate. In Sulfurisphaera tokodaii (strain DSM 16993 / JCM 10545 / NBRC 100140 / 7) (Sulfolobus tokodaii), this protein is Uracil phosphoribosyltransferase.